The sequence spans 419 residues: L-rhamnose isomerase (419 aa).

Mn(2+) contacts are provided by His-262, Asp-294, and Asp-296.

The protein belongs to the rhamnose isomerase family. As to quaternary structure, homotetramer. Mn(2+) serves as cofactor.

It localises to the cytoplasm. The enzyme catalyses L-rhamnopyranose = L-rhamnulose. The protein operates within carbohydrate degradation; L-rhamnose degradation; glycerone phosphate from L-rhamnose: step 1/3. Catalyzes the interconversion of L-rhamnose and L-rhamnulose. This is L-rhamnose isomerase from Salmonella typhimurium (strain LT2 / SGSC1412 / ATCC 700720).